Consider the following 200-residue polypeptide: NAD(P)H dehydrogenase (quinone) (200 aa).

A Flavodoxin-like domain is found at 7–199 (LAIVFYSSTG…RQVELTAKLL (193 aa)). FMN-binding positions include 13–18 (SSTGTG), 86–88 (TRF), 121–127 (SAQNVNG), and histidine 142.

It belongs to the WrbA family. Homotetramer. FMN is required as a cofactor.

The catalysed reaction is a quinone + NADH + H(+) = a quinol + NAD(+). It carries out the reaction a quinone + NADPH + H(+) = a quinol + NADP(+). The polypeptide is NAD(P)H dehydrogenase (quinone) (Deinococcus radiodurans (strain ATCC 13939 / DSM 20539 / JCM 16871 / CCUG 27074 / LMG 4051 / NBRC 15346 / NCIMB 9279 / VKM B-1422 / R1)).